A 110-amino-acid polypeptide reads, in one-letter code: Insulin-1 (110 aa).

An N-terminal signal peptide occupies residues 1–24; the sequence is MALWMRFLPLLALLVLWEPKPAQA. Cystine bridges form between Cys31–Cys96, Cys43–Cys109, and Cys95–Cys100. The propeptide at 57–87 is c peptide; that stretch reads EVEDPQVPQLELGGGPEAGDLQTLALEVARQ.

It belongs to the insulin family. In terms of assembly, heterodimer of a B chain and an A chain linked by two disulfide bonds.

Its subcellular location is the secreted. Functionally, insulin decreases blood glucose concentration. It increases cell permeability to monosaccharides, amino acids and fatty acids. It accelerates glycolysis, the pentose phosphate cycle, and glycogen synthesis in liver. This chain is Insulin-1 (Ins1), found in Rattus norvegicus (Rat).